Here is a 398-residue protein sequence, read N- to C-terminus: Calcium-binding and coiled-coil domain-containing protein 2 (398 aa).

The CLIR motif lies at 133–136; that stretch reads ILVV. Positions 137 to 301 form a coiled coil; it reads TTQGEVEEIE…RENSRLLSYM (165 aa). The LIR-like motif lies at 203–206; sequence DYWE. Residues 314–341 form a disordered region; sequence TSDEGGAGQNPGLVYGNPYSGIQESSSP. The tract at residues 323–333 is interaction with LGALS8; sequence NPGLVYGNPYS. The interaction with MYO6 stretch occupies residues 347–398; it reads KKCPICKADDICDHTLEQQQMQALCLNCPICDKIFPATEKQIFEDHVFCHSL. The UBZ1-type zinc finger occupies 371–396; the sequence is CLNCPICDKIFPATEKQIFEDHVFCH. The Zn(2+) site is built by Cys-374, Cys-377, His-392, and His-396. Position 397 is a phosphoserine (Ser-397).

It belongs to the CALCOCO family. Dimer. Part of a complex consisting of CALCOCO2, TAX1BP1 and MYO6. Interacts with MYO6. Interacts with GEMIN4. Interacts with ATG8 family members MAP1LC3A, MAP1LC3B, GABARAP, GABARAPL1 and GABARAPL2. Interacts with ATG8 family member MAP1LC3C. Interacts with LGALS8. Interacts with TOM1; the interaction is indirect and is mediated by MYO6, which acts as a bridge between TOM1 and CALCOCO2. Interacts with AZI2.

It is found in the cytoplasm. It localises to the perinuclear region. The protein localises to the cytoskeleton. Its subcellular location is the cytoplasmic vesicle. The protein resides in the autophagosome membrane. In terms of biological role, xenophagy-specific receptor required for autophagy-mediated intracellular bacteria degradation. Acts as an effector protein of galectin-sensed membrane damage that restricts the proliferation of infecting pathogens upon entry into the cytosol by targeting LGALS8-associated bacteria for autophagy. Initially orchestrates bacteria targeting to autophagosomes and subsequently ensures pathogen degradation by regulating pathogen-containing autophagosome maturation. Bacteria targeting to autophagosomes relies on its interaction with MAP1LC3A, MAP1LC3B and/or GABARAPL2, whereas regulation of pathogen-containing autophagosome maturation requires the interaction with MAP3LC3C. May play a role in ruffle formation and actin cytoskeleton organization and seems to negatively regulate constitutive secretion. This is Calcium-binding and coiled-coil domain-containing protein 2 from Macaca fascicularis (Crab-eating macaque).